A 328-amino-acid polypeptide reads, in one-letter code: MAIIHFTKVHGSQNDFFLVDEEENHITAWSDTKRADFAIKLCDRSHSLGGADGILYVAKSNKAGAIGQMRVVNSDGSIASMCGNGLRTVARYLLEKHALTDAKVETMKAILDVRKATSLGFDIPTYQVEISPVKFNPESLPMYVGVEKLFNQVIPELDEELAFSAVSVPNPHLITFVDQTVLDSDKQEKLASFLNSENPYFPDGVNVSFVKRLNEDAIYVRTFERGVGFTNACGTAMSACSLIKKMLDQDTLETPLNVYNDGGRVQVTAKKDETGDISLQLIGNATFVSTGSVRYDDIVTELTNEATVEQAQYQELVQEVKHFLKTTG.

Substrate is bound by residues Asn14 and Asn73. Cys82 serves as the catalytic Proton donor. Substrate-binding positions include 83-84, Asn170, Asn206, and 224-225; these read GN and ER. The active-site Proton acceptor is Cys233. Residue 234-235 coordinates substrate; that stretch reads GT.

It belongs to the diaminopimelate epimerase family. Homodimer.

The protein localises to the cytoplasm. It carries out the reaction (2S,6S)-2,6-diaminopimelate = meso-2,6-diaminopimelate. It functions in the pathway amino-acid biosynthesis; L-lysine biosynthesis via DAP pathway; DL-2,6-diaminopimelate from LL-2,6-diaminopimelate: step 1/1. Functionally, catalyzes the stereoinversion of LL-2,6-diaminopimelate (L,L-DAP) to meso-diaminopimelate (meso-DAP), a precursor of L-lysine and an essential component of the bacterial peptidoglycan. The protein is Diaminopimelate epimerase of Listeria welshimeri serovar 6b (strain ATCC 35897 / DSM 20650 / CCUG 15529 / CIP 8149 / NCTC 11857 / SLCC 5334 / V8).